The following is a 232-amino-acid chain: Large ribosomal subunit protein uL1 (232 aa).

This sequence belongs to the universal ribosomal protein uL1 family. Part of the 50S ribosomal subunit.

Functionally, binds directly to 23S rRNA. The L1 stalk is quite mobile in the ribosome, and is involved in E site tRNA release. Its function is as follows. Protein L1 is also a translational repressor protein, it controls the translation of the L11 operon by binding to its mRNA. The sequence is that of Large ribosomal subunit protein uL1 from Paraburkholderia xenovorans (strain LB400).